Reading from the N-terminus, the 567-residue chain is Phosphoglucomutase-like protein 5 (567 aa).

A disordered region spans residues 1–26 (MEGSPIPVLTVPTAPYEDQRPTGGGG). Position 120 is a phosphothreonine (Thr-120). Ser-122 bears the Phosphoserine mark.

This sequence belongs to the phosphohexose mutase family. Interacts with DMD/dystrophin; the interaction is direct. Interacts with UTRN/utrophin.

It localises to the cell junction. The protein localises to the adherens junction. The protein resides in the cytoplasm. Its subcellular location is the cytoskeleton. It is found in the cell membrane. It localises to the sarcolemma. Functionally, component of adherens-type cell-cell and cell-matrix junctions. Has no phosphoglucomutase activity in vitro. The chain is Phosphoglucomutase-like protein 5 from Rattus norvegicus (Rat).